The following is a 215-amino-acid chain: Probable transaldolase (215 aa).

K83 functions as the Schiff-base intermediate with substrate in the catalytic mechanism.

This sequence belongs to the transaldolase family. Type 3B subfamily.

The protein resides in the cytoplasm. The catalysed reaction is D-sedoheptulose 7-phosphate + D-glyceraldehyde 3-phosphate = D-erythrose 4-phosphate + beta-D-fructose 6-phosphate. It functions in the pathway carbohydrate degradation; pentose phosphate pathway; D-glyceraldehyde 3-phosphate and beta-D-fructose 6-phosphate from D-ribose 5-phosphate and D-xylulose 5-phosphate (non-oxidative stage): step 2/3. Functionally, transaldolase is important for the balance of metabolites in the pentose-phosphate pathway. The chain is Probable transaldolase from Heliobacterium modesticaldum (strain ATCC 51547 / Ice1).